We begin with the raw amino-acid sequence, 904 residues long: Alanine--tRNA ligase (904 aa).

Residues histidine 584, histidine 588, cysteine 687, and histidine 691 each contribute to the Zn(2+) site.

Belongs to the class-II aminoacyl-tRNA synthetase family. Zn(2+) is required as a cofactor.

It is found in the cytoplasm. The enzyme catalyses tRNA(Ala) + L-alanine + ATP = L-alanyl-tRNA(Ala) + AMP + diphosphate. Catalyzes the attachment of alanine to tRNA(Ala) in a two-step reaction: alanine is first activated by ATP to form Ala-AMP and then transferred to the acceptor end of tRNA(Ala). Also edits incorrectly charged Ser-tRNA(Ala) and Gly-tRNA(Ala) via its editing domain. The chain is Alanine--tRNA ligase from Mycobacterium bovis (strain ATCC BAA-935 / AF2122/97).